A 772-amino-acid chain; its full sequence is Endoplasmic reticulum membrane sensor NFE2L1 (772 aa).

Residues 7 to 24 traverse the membrane as a helical; Signal-anchor for type II membrane protein segment; that stretch reads YFTEGLIQFTILLSLIGV. Residues 191 to 199 form a cholesterol recognition/amino acid consensus (CRAC) region region; that stretch reads IFDYSHRQK. The segment covering 198–216 has biased composition (basic and acidic residues); sequence QKESEVDKELSDGRERGDG. Residues 198–223 form a disordered region; the sequence is QKESEVDKELSDGRERGDGWRSAGGQ. 8 N-linked (GlcNAc...) asparagine glycosylation sites follow: N332, N340, N362, N402, N407, N414, N425, and N429. The tract at residues 472–531 is disordered; it reads EEEFDSDSGLSLDSGHSPASLSSSEASSSSSSSSSSSSSSSSSSSSFSEEGAVGYSSDSE. The span at 478-519 shows a compositional bias: low complexity; it reads DSGLSLDSGHSPASLSSSEASSSSSSSSSSSSSSSSSSSSFS. The N-linked (GlcNAc...) asparagine glycan is linked to N574. Residues 581–613 are disordered; sequence PGTLDPEEPKLPSVGKKSSKEKPSEFLDKQMSR. Over residues 598–613 the composition is skewed to basic and acidic residues; it reads SSKEKPSEFLDKQMSR. Positions 654-717 constitute a bZIP domain; the sequence is LIRDIRRRGK…RQMKQKVQNL (64 aa). A basic motif region spans residues 656–675; that stretch reads RDIRRRGKNKMAAQNCRKRK. The segment at 682–696 is leucine-zipper; it reads LERDVEDLQRDKSKL. The short motif at 761–768 is the Nuclear localization signal element; it reads RRQERKQK.

This sequence belongs to the bZIP family. CNC subfamily. In terms of assembly, interacts (via the bZIP domain) with small MAF protein (MAFF, MAFG or MAFK); required for binding to antioxidant response elements (AREs) on DNA. Post-translationally, cleaved at Leu-104 following retrotranslocation, releasing the protein from the endoplasmic reticulum membrane and forming the transcription factor NRF1 that translocates into the nucleus.

Its subcellular location is the endoplasmic reticulum membrane. It is found in the nucleus. Its function is as follows. Endoplasmic reticulum membrane sensor that translocates into the nucleus in response to various stresses to act as a transcription factor. Constitutes a precursor of the transcription factor NRF1. Able to detect various cellular stresses, such as cholesterol excess, oxidative stress or proteasome inhibition. In response to stress, it is released from the endoplasmic reticulum membrane following cleavage and translocates into the nucleus to form the transcription factor NRF1. Acts as a key sensor of cholesterol excess: in excess cholesterol conditions, the endoplasmic reticulum membrane form of the protein directly binds cholesterol via its CRAC motif, preventing cleavage and release of the transcription factor NRF1, thereby allowing expression of genes promoting cholesterol removal. Involved in proteasome homeostasis: in response to proteasome inhibition, it is released from the endoplasmic reticulum membrane, translocates to the nucleus and activates expression of genes encoding proteasome subunits. CNC-type bZIP family transcription factor that translocates to the nucleus and regulates expression of target genes in response to various stresses. Heterodimerizes with small-Maf proteins (MAFF, MAFG or MAFK) and binds DNA motifs including the antioxidant response elements (AREs), which regulate expression of genes involved in oxidative stress response. Activates or represses expression of target genes, depending on the context. Plays a key role in cholesterol homeostasis by acting as a sensor of cholesterol excess: in low cholesterol conditions, translocates into the nucleus and represses expression of genes involved in defense against cholesterol excess. In excess cholesterol conditions, the endoplasmic reticulum membrane form of the protein directly binds cholesterol via its CRAC motif, preventing cleavage and release of the transcription factor NRF1, thereby allowing expression of genes promoting cholesterol removal. Critical for redox balance in response to oxidative stress: acts by binding the AREs motifs on promoters and mediating activation of oxidative stress response genes. Involved in proteasome homeostasis: in response to proteasome inhibition, mediates the 'bounce-back' of proteasome subunits by translocating into the nucleus and activating expression of genes encoding proteasome subunits. In Gallus gallus (Chicken), this protein is Endoplasmic reticulum membrane sensor NFE2L1.